The primary structure comprises 300 residues: ATP-dependent (S)-NAD(P)H-hydrate dehydratase (300 aa).

One can recognise a YjeF C-terminal domain in the interval I7 to V289. (6S)-NADPHX is bound by residues G107 and N160 to R166. Residues K194 to D198 and G213 to G222 contribute to the ATP site. (6S)-NADPHX is bound at residue D223.

Belongs to the NnrD/CARKD family. It depends on Mg(2+) as a cofactor.

The catalysed reaction is (6S)-NADHX + ATP = ADP + phosphate + NADH + H(+). It catalyses the reaction (6S)-NADPHX + ATP = ADP + phosphate + NADPH + H(+). Its function is as follows. Catalyzes the dehydration of the S-form of NAD(P)HX at the expense of ATP, which is converted to ADP. Together with NAD(P)HX epimerase, which catalyzes the epimerization of the S- and R-forms, the enzyme allows the repair of both epimers of NAD(P)HX, a damaged form of NAD(P)H that is a result of enzymatic or heat-dependent hydration. In Entamoeba histolytica (strain ATCC 30459 / HM-1:IMSS / ABRM), this protein is ATP-dependent (S)-NAD(P)H-hydrate dehydratase.